The primary structure comprises 791 residues: RAS guanyl-releasing protein 1 (791 aa).

In terms of domain architecture, N-terminal Ras-GEF spans 49–172 (LGKLSKGASL…RLIDTAQINS (124 aa)). A ras exchanger motif region; required for transforming activity region spans residues 53-106 (SKGASLDELIQMCIQAFDLDGNMGQNNELLQIMLTMHGFLIPSTELLIKLRTLY). Residues 201–432 (EPQELAEHLT…YELSYAREPR (232 aa)) enclose the Ras-GEF domain. EF-hand domains are found at residues 466-501 (HVQRMVDSVFKNYDLDQDGYISQEEFEKIAASFPFS) and 502-528 (FCVMDKDREGLISRQEITAYFMRASSI). Positions 479, 481, 483, 485, 490, 506, 508, 510, and 517 each coordinate Ca(2+). Residues 537 to 587 (LHNFQETTYLRPTFCDNCAGFLWGVIKQGYRCKDCGMNCHKQCKELVVFEC) form a Phorbol-ester/DAG-type zinc finger. Residues 671–715 (TQTENETQSLCLQVPSPPRSRTPDLTSHLPISPMPSPCPSPVPTR) form a disordered region. Residues 672–681 (QTENETQSLC) are compositionally biased toward polar residues. Residues 702-712 (SPMPSPCPSPV) show a composition bias toward pro residues. The stretch at 728-783 (IRKARAELRGGKAGIQELEKEKVFLKEENTALKIQLKDAHRRVETLRAELRKYVLD) forms a coiled coil.

The protein belongs to the RASGRP family.

The protein resides in the cytoplasm. Its subcellular location is the cytosol. It is found in the cell membrane. It localises to the golgi apparatus membrane. The protein localises to the endoplasmic reticulum membrane. Regulated by F-actin polymerization and probably by calcium. Functions as a diacylglycerol (DAG)-regulated nucleotide exchange factor specifically activating Ras through the exchange of bound GDP for GTP. The polypeptide is RAS guanyl-releasing protein 1 (rasgrp1) (Xenopus laevis (African clawed frog)).